Reading from the N-terminus, the 191-residue chain is Elongation factor P (191 aa).

This sequence belongs to the elongation factor P family.

It is found in the cytoplasm. It participates in protein biosynthesis; polypeptide chain elongation. In terms of biological role, involved in peptide bond synthesis. Stimulates efficient translation and peptide-bond synthesis on native or reconstituted 70S ribosomes in vitro. Probably functions indirectly by altering the affinity of the ribosome for aminoacyl-tRNA, thus increasing their reactivity as acceptors for peptidyl transferase. The polypeptide is Elongation factor P (Ralstonia pickettii (strain 12J)).